A 691-amino-acid polypeptide reads, in one-letter code: Lacticin-481/lactococcin-DR transport/processing ATP-binding protein lcnDR3 (691 aa).

In terms of domain architecture, Peptidase C39 spans glutamine 6 to leucine 130. Residue cysteine 12 is part of the active site. The region spanning threonine 158 to arginine 434 is the ABC transmembrane type-1 domain. 5 helical membrane passes run phenylalanine 159–leucine 179, isoleucine 189–methionine 209, glycine 262–leucine 284, phenylalanine 289–serine 311, and isoleucine 385–isoleucine 405. In terms of domain architecture, ABC transporter spans isoleucine 464–valine 689. Glycine 497 to serine 504 is a binding site for ATP.

The protein belongs to the ABC transporter superfamily.

Its subcellular location is the cell membrane. In terms of biological role, probably implicated in the export process of the lantibiotic lacticin-481/lactococcin-DR. The protein is Lacticin-481/lactococcin-DR transport/processing ATP-binding protein lcnDR3 (lcnDR3) of Lactococcus lactis subsp. lactis (Streptococcus lactis).